The following is a 92-amino-acid chain: Small ribosomal subunit protein bS18 (92 aa).

It belongs to the bacterial ribosomal protein bS18 family. In terms of assembly, part of the 30S ribosomal subunit. Forms a tight heterodimer with protein bS6.

Functionally, binds as a heterodimer with protein bS6 to the central domain of the 16S rRNA, where it helps stabilize the platform of the 30S subunit. This is Small ribosomal subunit protein bS18 from Chlorobium chlorochromatii (strain CaD3).